The chain runs to 294 residues: Nucleotide-binding protein CA_C0511 (294 aa).

8–15 (GLSGAGKT) is an ATP binding site. GTP is bound at residue 59–62 (DIRG).

Belongs to the RapZ-like family.

Displays ATPase and GTPase activities. The chain is Nucleotide-binding protein CA_C0511 from Clostridium acetobutylicum (strain ATCC 824 / DSM 792 / JCM 1419 / IAM 19013 / LMG 5710 / NBRC 13948 / NRRL B-527 / VKM B-1787 / 2291 / W).